Here is a 331-residue protein sequence, read N- to C-terminus: MATRNRTLLFRKYRNSLRSVRAPMGSSSSSTLTEHNSLTGAKSGLGPVIEMASTSLLNPNRSYAPVSTEDPGNSSRGTITVGLPPDWVDVSEEISVYIQRARTKMAELGKAHAKALMPSFGDGKEDQHQIETLTQEVTFLLKKSEKQLQRLSAAGPSEDSNVRKNVQRSLATDLQNLSMELRKKQSTYLKRLRLQKEDGADLEMNLNGSRYKAEDDDFDDMVFSEHQMSKIKKSEEISIEREKEIQQVVESVSELAQIMKDLSALVIDQGTIVDRIDYNIQNVASTVDDGLKQLQKAERTQRQGGMVMCASVLVILCFIMLVLLILKEILL.

At 1–305 the chain is on the cytoplasmic side; that stretch reads MATRNRTLLF…KAERTQRQGG (305 aa). 2 disordered regions span residues 20 to 45 and 59 to 80; these read VRAP…KSGL and PNRS…GTIT. Over residues 31–40 the composition is skewed to polar residues; it reads TLTEHNSLTG. Positions 124–154 form a coiled coil; it reads KEDQHQIETLTQEVTFLLKKSEKQLQRLSAA. One can recognise a t-SNARE coiled-coil homology domain in the interval 235–297; it reads EEISIEREKE…DDGLKQLQKA (63 aa). The helical; Anchor for type IV membrane protein transmembrane segment at 306 to 326 threads the bilayer; sequence MVMCASVLVILCFIMLVLLIL. At 327-331 the chain is on the vesicular side; sequence KEILL.

This sequence belongs to the syntaxin family. Part of the t-SNARE complex. As to expression, expressed at low levels in roots, stems, flowers and leaves.

Its subcellular location is the golgi apparatus. It is found in the trans-Golgi network membrane. Functionally, contributes to the regulation of secretory and vacuolar transport pathways in the post-Golgi network, and to the maintenance of the Golgi apparatus and trans-Golgi network (TGN) morphologies. Vesicle trafficking protein that functions in the secretory pathway and mediates liposome fusion. Required for extracellular resistance responses to a fungal pathogen. Also involved in the protection of chloroplasts from salicylic acid-dependent biotic stress. This Arabidopsis thaliana (Mouse-ear cress) protein is Syntaxin-43.